The primary structure comprises 631 residues: E3 ubiquitin-protein ligase Zswim2 (631 aa).

The SWIM-type zinc finger occupies Phe54–Phe87. A UBE2D1-binding region spans residues Lys139 to Leu348. The RING-type 1 zinc-finger motif lies at Cys147–Arg199. Residues His230–Gln281 form a ZZ-type zinc finger. The Zn(2+) site is built by Cys235, Cys238, Cys250, Cys253, Cys259, Cys262, His268, and His271. The RING-type 2 zinc-finger motif lies at Cys344 to Arg386. The interval Ser589 to Pro614 is disordered. Over residues Val599–Arg608 the composition is skewed to basic residues.

As to quaternary structure, dimer. Interacts with UBE2D1. In terms of processing, polyubiquitinated. Polyubiquitination is followed by degradation via the proteasome. In terms of tissue distribution, expressed only in testis.

It carries out the reaction S-ubiquitinyl-[E2 ubiquitin-conjugating enzyme]-L-cysteine + [acceptor protein]-L-lysine = [E2 ubiquitin-conjugating enzyme]-L-cysteine + N(6)-ubiquitinyl-[acceptor protein]-L-lysine.. E3 ubiquitin-protein ligase involved in the regulation of Fas-, DR3- and DR4-mediated apoptosis. Functions in conjunction with the UBE2D1, UBE2D3 and UBE2E1 E2 ubiquitin-conjugating enzymes. The protein is E3 ubiquitin-protein ligase Zswim2 (Zswim2) of Mus musculus (Mouse).